We begin with the raw amino-acid sequence, 558 residues long: Arginine--tRNA ligase (558 aa).

A 'HIGH' region motif is present at residues 116 to 126 (ANPNGPLHVGH).

The protein belongs to the class-I aminoacyl-tRNA synthetase family.

It localises to the cytoplasm. The catalysed reaction is tRNA(Arg) + L-arginine + ATP = L-arginyl-tRNA(Arg) + AMP + diphosphate. In Methanocorpusculum labreanum (strain ATCC 43576 / DSM 4855 / Z), this protein is Arginine--tRNA ligase.